Here is an 88-residue protein sequence, read N- to C-terminus: Large ribosomal subunit protein bL27 (88 aa).

The interval 1 to 21 (MAHKKGQGSTQNNRDSAGRRL) is disordered.

This sequence belongs to the bacterial ribosomal protein bL27 family.

The protein is Large ribosomal subunit protein bL27 of Helicobacter pylori (strain J99 / ATCC 700824) (Campylobacter pylori J99).